A 382-amino-acid polypeptide reads, in one-letter code: S-adenosylmethionine synthase (382 aa).

Position 16 (His-16) interacts with ATP. Asp-18 is a binding site for Mg(2+). K(+) is bound at residue Glu-44. Positions 57 and 100 each coordinate L-methionine. Positions Gln-100–Asn-110 are flexible loop. Residues Asp-165–Lys-167, Arg-231–Phe-232, Asp-240, Arg-246–Lys-247, and Lys-267 contribute to the ATP site. Asp-240 lines the L-methionine pocket. Position 271 (Lys-271) interacts with L-methionine.

The protein belongs to the AdoMet synthase family. Homotetramer; dimer of dimers. Mg(2+) serves as cofactor. Requires K(+) as cofactor.

The protein resides in the cytoplasm. It carries out the reaction L-methionine + ATP + H2O = S-adenosyl-L-methionine + phosphate + diphosphate. The protein operates within amino-acid biosynthesis; S-adenosyl-L-methionine biosynthesis; S-adenosyl-L-methionine from L-methionine: step 1/1. In terms of biological role, catalyzes the formation of S-adenosylmethionine (AdoMet) from methionine and ATP. The overall synthetic reaction is composed of two sequential steps, AdoMet formation and the subsequent tripolyphosphate hydrolysis which occurs prior to release of AdoMet from the enzyme. This chain is S-adenosylmethionine synthase, found in Legionella pneumophila subsp. pneumophila (strain Philadelphia 1 / ATCC 33152 / DSM 7513).